The primary structure comprises 340 residues: UDP-3-O-(3-hydroxymyristoyl)glucosamine N-acyltransferase (340 aa).

H239 (proton acceptor) is an active-site residue.

This sequence belongs to the transferase hexapeptide repeat family. LpxD subfamily. Homotrimer.

It catalyses the reaction a UDP-3-O-[(3R)-3-hydroxyacyl]-alpha-D-glucosamine + a (3R)-hydroxyacyl-[ACP] = a UDP-2-N,3-O-bis[(3R)-3-hydroxyacyl]-alpha-D-glucosamine + holo-[ACP] + H(+). It carries out the reaction UDP-3-O-[(3R)-3-hydroxytetradecanoyl]-alpha-D-glucosamine + (3R)-hydroxytetradecanoyl-[ACP] = UDP-2-N,3-O-bis[(3R)-3-hydroxytetradecanoyl]-alpha-D-glucosamine + holo-[ACP] + H(+). Its pathway is glycolipid biosynthesis; lipid IV(A) biosynthesis; lipid IV(A) from (3R)-3-hydroxytetradecanoyl-[acyl-carrier-protein] and UDP-N-acetyl-alpha-D-glucosamine: step 3/6. Catalyzes the N-acylation of UDP-3-O-(hydroxytetradecanoyl)glucosamine using 3-hydroxytetradecanoyl-ACP as the acyl donor. Is involved in the biosynthesis of lipid A, a phosphorylated glycolipid that anchors the lipopolysaccharide to the outer membrane of the cell. The chain is UDP-3-O-(3-hydroxymyristoyl)glucosamine N-acyltransferase from Sodalis glossinidius (strain morsitans).